Here is a 310-residue protein sequence, read N- to C-terminus: MKPKIFIDGEHGTTGLQIRVRMAGRTDLELLSIPEAERRNAAMREDLLNSADIAILCLPDDASREAVAMVAGNNRVRIIDTSTAHRVAPDWAYGFAEMDKAQPQRIRDARHVANPGCYPTGAIALIRPLRQAGILPDGYPVTVNAVSGYTGGGKQMIAQMEDDQNPDHIGAPHFLYGLTLKHKHVPEMKMHGLLERAPVFSPSVGKFAQGMIVQVPLYLEDLAAGATLETIHRALVDHYAGQSIVEVVPLDESAKLARIDATELAGSDAMKLFVFGTKGGAHVNLVALLDNLGKGASGAAVQNMDLMLSA.

Residue cysteine 117 is part of the active site.

The protein belongs to the NAGSA dehydrogenase family. Type 2 subfamily.

It localises to the cytoplasm. It catalyses the reaction N-acetyl-L-glutamate 5-semialdehyde + phosphate + NADP(+) = N-acetyl-L-glutamyl 5-phosphate + NADPH + H(+). Its pathway is amino-acid biosynthesis; L-arginine biosynthesis; N(2)-acetyl-L-ornithine from L-glutamate: step 3/4. Functionally, catalyzes the NADPH-dependent reduction of N-acetyl-5-glutamyl phosphate to yield N-acetyl-L-glutamate 5-semialdehyde. The polypeptide is N-acetyl-gamma-glutamyl-phosphate reductase (Rhizobium meliloti (strain 1021) (Ensifer meliloti)).